We begin with the raw amino-acid sequence, 313 residues long: Probable F-box protein At3g44130 (313 aa).

Residues 1-46 (MASGNLPWELEEEILCRLPLGSLVRLRSVCKHWNDFFNDKWFIKKS) enclose the F-box domain.

The polypeptide is Probable F-box protein At3g44130 (Arabidopsis thaliana (Mouse-ear cress)).